Here is a 488-residue protein sequence, read N- to C-terminus: Probable metabolite transport protein YBR241C (488 aa).

At 1–18 (MAETERLMPNGGSRETKP) the chain is on the cytoplasmic side. The helical transmembrane segment at 19 to 39 (LITGHLILGTIVACLGSIQYG) threads the bilayer. The Vacuolar segment spans residues 40-87 (YHIAELNAPQEFLSCSRFEAPDENISYDDTWVGQHGLKQCIALTDSQY). Asn-63 carries an N-linked (GlcNAc...) asparagine glycan. Residues 88–108 (GAITSIFSIGGLFGSYYAGNW) traverse the membrane as a helical segment. The Cytoplasmic portion of the chain corresponds to 109–121 (ANRYGRKYVSMGA). A helical transmembrane segment spans residues 122 to 142 (SAMCMVSSLLLFFSNSYLQLL). Over 143-146 (FGRF) the chain is Vacuolar. Residues 147–167 (LVGMSCGTAIVITPLFINEIA) traverse the membrane as a helical segment. At 168–178 (PVEWRGAMGSM) the chain is on the cytoplasmic side. The chain crosses the membrane as a helical span at residues 179-198 (NQVSINLGILLTQTLALKYA). The Vacuolar portion of the chain corresponds to 199–204 (DSYNWR). Residues 205-225 (WLLFSGSVIAVANILAWLKVD) traverse the membrane as a helical segment. The Cytoplasmic portion of the chain corresponds to 226–299 (ESPRWLVSHG…DPSYKKPRTV (74 aa)). Positions 258-279 (EIQDWQRSHGHNRDPESSEETH) are enriched in basic and acidic residues. Residues 258–281 (EIQDWQRSHGHNRDPESSEETHSG) are disordered. The helical transmembrane segment at 300-320 (ILAILSCQQFCGINSIIFYGV) threads the bilayer. The Vacuolar portion of the chain corresponds to 321–322 (KV). A helical membrane pass occupies residues 323–337 (IGKILPDYSIQVNFA). Topologically, residues 338–344 (ISILNVV) are cytoplasmic. Residues 345–364 (VTLAASAIIDHVGRRPLLLA) form a helical membrane-spanning segment. The Vacuolar portion of the chain corresponds to 365 to 390 (STTVMTAMSLLISVGLTLSVSFLLVT). Residues 391 to 411 (ATFVYIAAFAIGLGPIPFLII) form a helical membrane-spanning segment. Topologically, residues 412–419 (GELSYPQD) are cytoplasmic. Residues 420–442 (AATAQSFGTVCNWLATFIVGYLF) form a helical membrane-spanning segment. Over 443-446 (PIGH) the chain is Vacuolar. A helical membrane pass occupies residues 447–463 (GLMGGYVFAIFAAIAAM). Residues 464–488 (FATYVYKRVPETKGKTTYSEVWAGY) lie on the Cytoplasmic side of the membrane.

The protein belongs to the major facilitator superfamily. Sugar transporter (TC 2.A.1.1) family.

The protein localises to the vacuole membrane. The sequence is that of Probable metabolite transport protein YBR241C from Saccharomyces cerevisiae (strain ATCC 204508 / S288c) (Baker's yeast).